Reading from the N-terminus, the 123-residue chain is Large ribosomal subunit protein bL12 (123 aa).

Belongs to the bacterial ribosomal protein bL12 family. As to quaternary structure, homodimer. Part of the ribosomal stalk of the 50S ribosomal subunit. Forms a multimeric L10(L12)X complex, where L10 forms an elongated spine to which 2 to 4 L12 dimers bind in a sequential fashion. Binds GTP-bound translation factors.

Its function is as follows. Forms part of the ribosomal stalk which helps the ribosome interact with GTP-bound translation factors. Is thus essential for accurate translation. This chain is Large ribosomal subunit protein bL12, found in Rhodospirillum rubrum (strain ATCC 11170 / ATH 1.1.1 / DSM 467 / LMG 4362 / NCIMB 8255 / S1).